A 593-amino-acid polypeptide reads, in one-letter code: A-type ATP synthase subunit A (593 aa).

Position 236–243 (236–243) interacts with ATP; sequence GPFGSGKT.

Belongs to the ATPase alpha/beta chains family. Has multiple subunits with at least A(3), B(3), C, D, E, F, H, I and proteolipid K(x).

It is found in the cell membrane. It carries out the reaction ATP + H2O + 4 H(+)(in) = ADP + phosphate + 5 H(+)(out). Its function is as follows. Produces ATP from ADP in the presence of a proton gradient across the membrane. The archaeal alpha chain is a catalytic subunit. In terms of biological role, component of the A-type ATP synthase that produces ATP from ADP in the presence of a proton gradient across the membrane. The A chain is the catalytic subunit. This Pyrobaculum aerophilum (strain ATCC 51768 / DSM 7523 / JCM 9630 / CIP 104966 / NBRC 100827 / IM2) protein is A-type ATP synthase subunit A.